The sequence spans 262 residues: Type III pantothenate kinase (262 aa).

7–14 lines the ATP pocket; sequence DIGNTRLK. Substrate is bound by residues tyrosine 96 and 103–106; that span reads GSDR. Aspartate 105 acts as the Proton acceptor in catalysis. Residue threonine 137 participates in ATP binding. Threonine 187 contacts substrate.

The protein belongs to the type III pantothenate kinase family. As to quaternary structure, homodimer. It depends on NH4(+) as a cofactor. K(+) is required as a cofactor.

The protein localises to the cytoplasm. It carries out the reaction (R)-pantothenate + ATP = (R)-4'-phosphopantothenate + ADP + H(+). Its pathway is cofactor biosynthesis; coenzyme A biosynthesis; CoA from (R)-pantothenate: step 1/5. Its function is as follows. Catalyzes the phosphorylation of pantothenate (Pan), the first step in CoA biosynthesis. This Leptothrix cholodnii (strain ATCC 51168 / LMG 8142 / SP-6) (Leptothrix discophora (strain SP-6)) protein is Type III pantothenate kinase.